A 145-amino-acid chain; its full sequence is UPF0763 protein CFF8240_1572 (145 aa).

It belongs to the UPF0763 family.

The protein is UPF0763 protein CFF8240_1572 of Campylobacter fetus subsp. fetus (strain 82-40).